We begin with the raw amino-acid sequence, 376 residues long: PqqA peptide cyclase (376 aa).

The Radical SAM core domain occupies 4–219 (VPPPLSVLLE…VETARRSLGD (216 aa)). Residues C18, C22, and C25 each contribute to the [4Fe-4S] cluster site.

This sequence belongs to the radical SAM superfamily. PqqE family. In terms of assembly, interacts with PqqD. The interaction is necessary for activity of PqqE. It depends on [4Fe-4S] cluster as a cofactor.

It catalyses the reaction [PQQ precursor protein] + S-adenosyl-L-methionine = E-Y cross-linked-[PQQ precursor protein] + 5'-deoxyadenosine + L-methionine + H(+). It participates in cofactor biosynthesis; pyrroloquinoline quinone biosynthesis. Catalyzes the cross-linking of a glutamate residue and a tyrosine residue in the PqqA protein as part of the biosynthesis of pyrroloquinoline quinone (PQQ). This chain is PqqA peptide cyclase, found in Xanthomonas campestris pv. campestris (strain B100).